The primary structure comprises 120 residues: NAD(P)H-quinone oxidoreductase subunit 3, organellar chromatophore (120 aa).

The next 3 helical transmembrane spans lie at 6–26 (GYDAFLGFLLIATAVPVLALL), 64–84 (MFALVFVIFDVETVFLYPWAV), and 89–109 (LGLLAFIEALIFIAILVIALA).

It belongs to the complex I subunit 3 family. In terms of assembly, NDH is composed of at least 16 different subunits, 5 of which are encoded in the nucleus.

It is found in the plastid. The protein localises to the organellar chromatophore thylakoid membrane. It carries out the reaction a plastoquinone + NADH + (n+1) H(+)(in) = a plastoquinol + NAD(+) + n H(+)(out). The catalysed reaction is a plastoquinone + NADPH + (n+1) H(+)(in) = a plastoquinol + NADP(+) + n H(+)(out). NDH shuttles electrons from NAD(P)H:plastoquinone, via FMN and iron-sulfur (Fe-S) centers, to quinones in the photosynthetic chain and possibly in a chloroplast respiratory chain. The immediate electron acceptor for the enzyme in this species is believed to be plastoquinone. Couples the redox reaction to proton translocation, and thus conserves the redox energy in a proton gradient. The protein is NAD(P)H-quinone oxidoreductase subunit 3, organellar chromatophore of Paulinella chromatophora.